The sequence spans 352 residues: Probable dual-specificity RNA methyltransferase RlmN (352 aa).

The active-site Proton acceptor is the glutamate 99. The Radical SAM core domain occupies 105–339 (TKSRTTACVS…VTVRRSRGKD (235 aa)). Cysteines 112 and 344 form a disulfide. 3 residues coordinate [4Fe-4S] cluster: cysteine 119, cysteine 123, and cysteine 126. S-adenosyl-L-methionine contacts are provided by residues 170–171 (GE), serine 202, 225–227 (SLH), and asparagine 301. Cysteine 344 acts as the S-methylcysteine intermediate in catalysis.

It belongs to the radical SAM superfamily. RlmN family. It depends on [4Fe-4S] cluster as a cofactor.

The protein resides in the cytoplasm. The enzyme catalyses adenosine(2503) in 23S rRNA + 2 reduced [2Fe-2S]-[ferredoxin] + 2 S-adenosyl-L-methionine = 2-methyladenosine(2503) in 23S rRNA + 5'-deoxyadenosine + L-methionine + 2 oxidized [2Fe-2S]-[ferredoxin] + S-adenosyl-L-homocysteine. It catalyses the reaction adenosine(37) in tRNA + 2 reduced [2Fe-2S]-[ferredoxin] + 2 S-adenosyl-L-methionine = 2-methyladenosine(37) in tRNA + 5'-deoxyadenosine + L-methionine + 2 oxidized [2Fe-2S]-[ferredoxin] + S-adenosyl-L-homocysteine. Its function is as follows. Specifically methylates position 2 of adenine 2503 in 23S rRNA and position 2 of adenine 37 in tRNAs. The chain is Probable dual-specificity RNA methyltransferase RlmN from Christiangramia forsetii (strain DSM 17595 / CGMCC 1.15422 / KT0803) (Gramella forsetii).